The sequence spans 469 residues: Adenosylhomocysteinase (469 aa).

Thr63, Asp139, and Glu164 together coordinate substrate. 165 to 167 provides a ligand contact to NAD(+); it reads TTT. Residues Lys194 and Asp198 each contribute to the substrate site. Residues Asn199, 228-233, Glu251, Asn300, 321-323, and Asn375 each bind NAD(+); these read GYGDVG and IGH.

This sequence belongs to the adenosylhomocysteinase family. It depends on NAD(+) as a cofactor.

The protein localises to the cytoplasm. The catalysed reaction is S-adenosyl-L-homocysteine + H2O = L-homocysteine + adenosine. It functions in the pathway amino-acid biosynthesis; L-homocysteine biosynthesis; L-homocysteine from S-adenosyl-L-homocysteine: step 1/1. In terms of biological role, may play a key role in the regulation of the intracellular concentration of adenosylhomocysteine. The polypeptide is Adenosylhomocysteinase (Pseudomonas entomophila (strain L48)).